The chain runs to 337 residues: PHD finger protein 11 (337 aa).

The C2HC pre-PHD-type zinc finger occupies 25–61 (KRTCALCPEGHEWSQIYFSPSGNIVAHENCLLYSSGL). A PHD-type zinc finger spans residues 91–143 (LKCSFCNKGGATVGCDLWFCKKSYHYVCAKKDQAILQVDGNHGTYKLFCPEHS). Disordered regions lie at residues 145–196 (EQEE…HGHT) and 301–337 (GDLD…GDSL). A compositionally biased stretch (basic and acidic residues) spans 187–196 (HMTEEPHGHT). Polar residues-rich tracts occupy residues 301–312 (GDLDCSSSTSGS) and 323–337 (SQES…GDSL).

As to quaternary structure, interacts with BRCA1 and RELA.

It localises to the nucleus. Positive regulator of Th1-type cytokine gene expression. In Mus musculus (Mouse), this protein is PHD finger protein 11 (Phf11).